Here is a 496-residue protein sequence, read N- to C-terminus: Probable cytosol aminopeptidase (496 aa).

Mn(2+) contacts are provided by lysine 251 and aspartate 256. Lysine 263 is an active-site residue. Residues aspartate 274, aspartate 333, and glutamate 335 each coordinate Mn(2+). Residue arginine 337 is part of the active site.

Belongs to the peptidase M17 family. Mn(2+) is required as a cofactor.

It is found in the cytoplasm. The enzyme catalyses Release of an N-terminal amino acid, Xaa-|-Yaa-, in which Xaa is preferably Leu, but may be other amino acids including Pro although not Arg or Lys, and Yaa may be Pro. Amino acid amides and methyl esters are also readily hydrolyzed, but rates on arylamides are exceedingly low.. The catalysed reaction is Release of an N-terminal amino acid, preferentially leucine, but not glutamic or aspartic acids.. Presumably involved in the processing and regular turnover of intracellular proteins. Catalyzes the removal of unsubstituted N-terminal amino acids from various peptides. The polypeptide is Probable cytosol aminopeptidase (Acidovorax sp. (strain JS42)).